Reading from the N-terminus, the 1473-residue chain is Collagen alpha-1(XVII) chain (1473 aa).

Basic and acidic residues predominate over residues 1 to 19; it reads MDITQKNKRDGTEVTERII. Disordered regions lie at residues 1 to 155 and 168 to 188; these read MDIT…PSTR and GSRSASVSPTRNSSNTLPIPK. The Cytoplasmic portion of the chain corresponds to 1–474; it reads MDITQKNKRD…CGSWCSWWKW (474 aa). Positions 1 to 572 are nonhelical region (NC16); it reads MDITQKNKRD…MTEQENGNLR (572 aa). 3 stretches are compositionally biased toward polar residues: residues 57-96, 111-120, and 170-184; these read LTHGSSGYINSSGSLRGNASTSSYRRAHSPASTLPNSPGS, EGSSSGNSSP, and RSASVSPTRNSSNTL. The interval 146–231 is necessary for interaction with DST and for the recruitment of DST to hemidesmosome; it reads RLQSASPSTR…WSSTLPAGSS (86 aa). The chain crosses the membrane as a helical; Signal-anchor for type II membrane protein span at residues 475 to 495; sequence LLGLLLTWLLLLGLLFGLIAL. Over 496–1473 the chain is Extracellular; that stretch reads AEEVRKLKAR…RRRRSIAVKP (978 aa). 3 disordered regions span residues 567 to 1017, 1173 to 1234, and 1261 to 1308; these read ENGN…LSSS, FRGI…ISGA, and SFIV…SSMG. Residues 573–1459 are triple-helical region; that stretch reads GSPGPKGDMG…KGEKGDKGDQ (887 aa). 4 stretches are compositionally biased toward low complexity: residues 619 to 638, 667 to 678, 729 to 742, and 769 to 790; these read EPGMEGPMGQRGREGPMGPR, PGSVGPKGSIGP, EPGAKGAMGPAGPD, and PGKPGLTGPQGPQGIPGTPGRP. Positions 814-835 are enriched in pro residues; it reads PGPPGPPGAMGPPGPPGAPGPV. Low complexity-rich tracts occupy residues 837–847 and 854–866; these read PAGLPGQQGPR and GESFMGSSSSFSE. 2 stretches are compositionally biased toward pro residues: residues 878–899 and 913–922; these read PPGPPGPPGPPGEGLPGPPGPP and PPGPPGPPGP. Over residues 940–957 the composition is skewed to low complexity; it reads FPGLSGSGSSSLGLNLQG. Composition is skewed to pro residues over residues 1001–1011 and 1179–1188; these read PPGPPGPPGPP and PPGPPGPPGL. Positions 1198-1210 are enriched in polar residues; sequence TEDLSSYLQTAGL. 2 stretches are compositionally biased toward pro residues: residues 1214–1228 and 1266–1275; these read PGPPGPPGPPGPRGP and PPGPPGPQGP. A compositionally biased stretch (low complexity) spans 1283 to 1307; it reads STDSSYSRSGSSSSFSRDTSYSSSM. An N-linked (GlcNAc...) asparagine glycan is attached at asparagine 1404. The interval 1417-1473 is disordered; it reads GAIPGPPGQKGEMGIPGPKGERGPAGPPGPRGHKGEKGDKGDQFYIGRRRRSIAVKP. The segment covering 1449–1458 has biased composition (basic and acidic residues); sequence HKGEKGDKGD. The segment at 1460-1473 is nonhelical region (NC1); that stretch reads FYIGRRRRSIAVKP. The span at 1463–1473 shows a compositional bias: basic residues; that stretch reads GRRRRSIAVKP.

In terms of assembly, homotrimers of alpha 1(XVII)chains. Interacts (via cytoplasmic region) with ITGB4 (via cytoplasmic region). Interacts (via cytoplasmic region) with DST (via N-terminus). Interacts (via N-terminus) with PLEC. Interacts (via cytoplasmic region) with DSP. The intracellular/endo domain is disulfide-linked. In terms of processing, prolines at the third position of the tripeptide repeating unit (G-X-Y) are hydroxylated in some or all of the chains. Post-translationally, the ectodomain is shedded from the surface of keratinocytes resulting in a 120-kDa soluble form, also named as 120 kDa linear IgA disease antigen homolog. The shedding is mediated by membrane-bound metalloproteases.

It is found in the cell junction. The protein resides in the hemidesmosome. Its subcellular location is the membrane. The protein localises to the secreted. It localises to the extracellular space. It is found in the extracellular matrix. The protein resides in the basement membrane. In terms of biological role, may play a role in the integrity of hemidesmosome and the attachment of basal keratinocytes to the underlying basement membrane. Functionally, the 120 kDa linear IgA disease antigen homolog is an anchoring filament component involved in dermal-epidermal cohesion. In Bos taurus (Bovine), this protein is Collagen alpha-1(XVII) chain (COL17A1).